Consider the following 1439-residue polypeptide: Gag-Pol polyprotein (1439 aa).

Gly2 carries N-myristoyl glycine; by host lipidation. The segment at 7–31 (VLSGGELDRWEKIRLRPGGKKKYRL) is interaction with Gp41. Residues 8-43 (LSGGELDRWEKIRLRPGGKKKYRLKHIVWASRELER) are interaction with host CALM1. The interval 12–19 (ELDRWEKI) is interaction with host AP3D1. Positions 14-33 (DRWEKIRLRPGGKKKYRLKH) are interaction with membrane phosphatidylinositol 4,5-bisphosphate and RNA. The Nuclear export signal motif lies at 16 to 22 (WEKIRLR). The Nuclear localization signal signature appears at 26–32 (KKKYRLK). The tract at residues 73 to 77 (EELTS) is interaction with membrane phosphatidylinositol 4,5-bisphosphate. Positions 106-128 (EEQTKSMKKAQQAAADTGNSSQV) are disordered. Tyr132 is subject to Phosphotyrosine; by host. The interaction with human PPIA/CYPA and NUP153 stretch occupies residues 189 to 227 (NTVGGHQAAMQMLKETINEEAAEWDRLHPVHAGPIAPGQ). The dimerization/Multimerization of capsid protein p24 stretch occupies residues 277-363 (YSPVSILDIR…GGPGHKARVL (87 aa)). 2 consecutive CCHC-type zinc fingers follow at residues 390–407 (VKCF…NCRA) and 411–428 (KGCW…ECTE). Positions 493 to 497 (PQITL) are dimerization of protease. The Peptidase A2 domain maps to 512 to 581 (KEALLDTGAD…TPVNIIGRNL (70 aa)). Asp517 acts as the For protease activity; shared with dimeric partner in catalysis. Dimerization of protease regions lie at residues 541–547 (GIGGFIK) and 580–592 (NLLT…LNFP). Residues 635-825 (EGKISKIGPE…PPFLWMGYEL (191 aa)) enclose the Reverse transcriptase domain. Residues Asp701, Asp776, and Asp777 each coordinate Mg(2+). The RT 'primer grip' stretch occupies residues 818 to 826 (FLWMGYELH). The short motif at 989–1005 (WETWWTEYWQATWIPEW) is the Tryptophan repeat motif element. In terms of domain architecture, RNase H type-1 spans 1025–1148 (IVGAETFYVD…VDKLVSAGIR (124 aa)). Mg(2+)-binding residues include Asp1034, Glu1069, Asp1089, and Asp1140. An Integrase-type zinc finger spans residues 1154-1195 (DGIDKAQEDHEKYHSNWRAMASDFNLPPIVAKEIVASCDKCQ). Zn(2+) contacts are provided by His1163, His1167, Cys1191, and Cys1194. In terms of domain architecture, Integrase catalytic spans 1205-1355 (VDCSPGIWQL…SAGERIIDII (151 aa)). The Mg(2+) site is built by Asp1215, Asp1267, and Glu1303. A DNA-binding region (integrase-type) is located at residues 1374–1421 (FRVYYRDNRDPIWKGPAKLLWKGEGAVVIQDNSDIKVVPRRKVKIIRD).

As to quaternary structure, homotrimer; further assembles as hexamers of trimers. Interacts with gp41 (via C-terminus). Interacts with host CALM1; this interaction induces a conformational change in the Matrix protein, triggering exposure of the myristate group. Interacts with host AP3D1; this interaction allows the polyprotein trafficking to multivesicular bodies during virus assembly. Part of the pre-integration complex (PIC) which is composed of viral genome, matrix protein, Vpr and integrase. In terms of assembly, homodimer; the homodimer further multimerizes as homohexamers or homopentamers. Interacts with human PPIA/CYPA; This interaction stabilizes the capsid. Interacts with human NUP153. Interacts with host PDZD8; this interaction stabilizes the capsid. Interacts with monkey TRIM5; this interaction destabilizes the capsid. Homodimer, whose active site consists of two apposed aspartic acid residues. As to quaternary structure, heterodimer of p66 RT and p51 RT (RT p66/p51). Heterodimerization of RT is essential for DNA polymerase activity. The overall folding of the subdomains is similar in p66 RT and p51 RT but the spatial arrangements of the subdomains are dramatically different. In terms of assembly, homotetramer; may further associate as a homohexadecamer. Part of the pre-integration complex (PIC) which is composed of viral genome, matrix protein, Vpr and integrase. Interacts with human SMARCB1/INI1 and human PSIP1/LEDGF isoform 1. Interacts with human KPNA3; this interaction might play a role in nuclear import of the pre-integration complex. Interacts with human NUP153; this interaction might play a role in nuclear import of the pre-integration complex. It depends on Mg(2+) as a cofactor. In terms of processing, specific enzymatic cleavages by the viral protease yield mature proteins. The protease is released by autocatalytic cleavage. The polyprotein is cleaved during and after budding, this process is termed maturation. Proteolytic cleavage of p66 RT removes the RNase H domain to yield the p51 RT subunit. Nucleocapsid protein p7 might be further cleaved after virus entry. Post-translationally, tyrosine phosphorylated presumably in the virion by a host kinase. Phosphorylation is apparently not a major regulator of membrane association. Phosphorylated possibly by host MAPK1; this phosphorylation is necessary for Pin1-mediated virion uncoating. In terms of processing, methylated by host PRMT6, impairing its function by reducing RNA annealing and the initiation of reverse transcription.

It is found in the host cell membrane. Its subcellular location is the host endosome. The protein localises to the host multivesicular body. It localises to the virion membrane. The protein resides in the host nucleus. It is found in the host cytoplasm. Its subcellular location is the virion. It carries out the reaction Specific for a P1 residue that is hydrophobic, and P1' variable, but often Pro.. The catalysed reaction is Endohydrolysis of RNA in RNA/DNA hybrids. Three different cleavage modes: 1. sequence-specific internal cleavage of RNA. Human immunodeficiency virus type 1 and Moloney murine leukemia virus enzymes prefer to cleave the RNA strand one nucleotide away from the RNA-DNA junction. 2. RNA 5'-end directed cleavage 13-19 nucleotides from the RNA end. 3. DNA 3'-end directed cleavage 15-20 nucleotides away from the primer terminus.. The enzyme catalyses 3'-end directed exonucleolytic cleavage of viral RNA-DNA hybrid.. It catalyses the reaction DNA(n) + a 2'-deoxyribonucleoside 5'-triphosphate = DNA(n+1) + diphosphate. With respect to regulation, protease: The viral protease is inhibited by many synthetic protease inhibitors (PIs), such as amprenavir, atazanavir, indinavir, loprinavir, nelfinavir, ritonavir and saquinavir. Use of protease inhibitors in tritherapy regimens permit more ambitious therapeutic strategies. Reverse transcriptase/ribonuclease H: RT can be inhibited either by nucleoside RT inhibitors (NRTIs) or by non nucleoside RT inhibitors (NNRTIs). NRTIs act as chain terminators, whereas NNRTIs inhibit DNA polymerization by binding a small hydrophobic pocket near the RT active site and inducing an allosteric change in this region. Classical NRTIs are abacavir, adefovir (PMEA), didanosine (ddI), lamivudine (3TC), stavudine (d4T), tenofovir (PMPA), zalcitabine (ddC), and zidovudine (AZT). Classical NNRTIs are atevirdine (BHAP U-87201E), delavirdine, efavirenz (DMP-266), emivirine (I-EBU), and nevirapine (BI-RG-587). The tritherapies used as a basic effective treatment of AIDS associate two NRTIs and one NNRTI. Functionally, mediates, with Gag polyprotein, the essential events in virion assembly, including binding the plasma membrane, making the protein-protein interactions necessary to create spherical particles, recruiting the viral Env proteins, and packaging the genomic RNA via direct interactions with the RNA packaging sequence (Psi). Gag-Pol polyprotein may regulate its own translation, by the binding genomic RNA in the 5'-UTR. At low concentration, the polyprotein would promote translation, whereas at high concentration, the polyprotein would encapsidate genomic RNA and then shut off translation. Its function is as follows. Targets the polyprotein to the plasma membrane via a multipartite membrane-binding signal, that includes its myristoylated N-terminus. Matrix protein is part of the pre-integration complex. Implicated in the release from host cell mediated by Vpu. Binds to RNA. In terms of biological role, forms the conical core that encapsulates the genomic RNA-nucleocapsid complex in the virion. Most core are conical, with only 7% tubular. The core is constituted by capsid protein hexamer subunits. The core is disassembled soon after virion entry. Host restriction factors such as TRIM5-alpha or TRIMCyp bind retroviral capsids and cause premature capsid disassembly, leading to blocks in reverse transcription. Capsid restriction by TRIM5 is one of the factors which restricts HIV-1 to the human species. Host PIN1 apparently facilitates the virion uncoating. On the other hand, interactions with PDZD8 or CYPA stabilize the capsid. Encapsulates and protects viral dimeric unspliced genomic RNA (gRNA). Binds these RNAs through its zinc fingers. Acts as a nucleic acid chaperone which is involved in rearangement of nucleic acid secondary structure during gRNA retrotranscription. Also facilitates template switch leading to recombination. As part of the polyprotein, participates in gRNA dimerization, packaging, tRNA incorporation and virion assembly. Functionally, aspartyl protease that mediates proteolytic cleavages of Gag and Gag-Pol polyproteins during or shortly after the release of the virion from the plasma membrane. Cleavages take place as an ordered, step-wise cascade to yield mature proteins. This process is called maturation. Displays maximal activity during the budding process just prior to particle release from the cell. Also cleaves Nef and Vif, probably concomitantly with viral structural proteins on maturation of virus particles. Hydrolyzes host EIF4GI and PABP1 in order to shut off the capped cellular mRNA translation. The resulting inhibition of cellular protein synthesis serves to ensure maximal viral gene expression and to evade host immune response. Also mediates cleavage of host YTHDF3. Mediates cleavage of host CARD8, thereby activating the CARD8 inflammasome, leading to the clearance of latent HIV-1 in patient CD4(+) T-cells after viral reactivation; in contrast, HIV-1 can evade CARD8-sensing when its protease remains inactive in infected cells prior to viral budding. Its function is as follows. Multifunctional enzyme that converts the viral RNA genome into dsDNA in the cytoplasm, shortly after virus entry into the cell. This enzyme displays a DNA polymerase activity that can copy either DNA or RNA templates, and a ribonuclease H (RNase H) activity that cleaves the RNA strand of RNA-DNA heteroduplexes in a partially processive 3' to 5' endonucleasic mode. Conversion of viral genomic RNA into dsDNA requires many steps. A tRNA(3)-Lys binds to the primer-binding site (PBS) situated at the 5'-end of the viral RNA. RT uses the 3' end of the tRNA primer to perform a short round of RNA-dependent minus-strand DNA synthesis. The reading proceeds through the U5 region and ends after the repeated (R) region which is present at both ends of viral RNA. The portion of the RNA-DNA heteroduplex is digested by the RNase H, resulting in a ssDNA product attached to the tRNA primer. This ssDNA/tRNA hybridizes with the identical R region situated at the 3' end of viral RNA. This template exchange, known as minus-strand DNA strong stop transfer, can be either intra- or intermolecular. RT uses the 3' end of this newly synthesized short ssDNA to perform the RNA-dependent minus-strand DNA synthesis of the whole template. RNase H digests the RNA template except for two polypurine tracts (PPTs) situated at the 5'-end and near the center of the genome. It is not clear if both polymerase and RNase H activities are simultaneous. RNase H probably can proceed both in a polymerase-dependent (RNA cut into small fragments by the same RT performing DNA synthesis) and a polymerase-independent mode (cleavage of remaining RNA fragments by free RTs). Secondly, RT performs DNA-directed plus-strand DNA synthesis using the PPTs that have not been removed by RNase H as primers. PPTs and tRNA primers are then removed by RNase H. The 3' and 5' ssDNA PBS regions hybridize to form a circular dsDNA intermediate. Strand displacement synthesis by RT to the PBS and PPT ends produces a blunt ended, linear dsDNA copy of the viral genome that includes long terminal repeats (LTRs) at both ends. In terms of biological role, catalyzes viral DNA integration into the host chromosome, by performing a series of DNA cutting and joining reactions. This enzyme activity takes place after virion entry into a cell and reverse transcription of the RNA genome in dsDNA. The first step in the integration process is 3' processing. This step requires a complex comprising the viral genome, matrix protein, Vpr and integrase. This complex is called the pre-integration complex (PIC). The integrase protein removes 2 nucleotides from each 3' end of the viral DNA, leaving recessed CA OH's at the 3' ends. In the second step, the PIC enters cell nucleus. This process is mediated through integrase and Vpr proteins, and allows the virus to infect a non dividing cell. This ability to enter the nucleus is specific of lentiviruses, other retroviruses cannot and rely on cell division to access cell chromosomes. In the third step, termed strand transfer, the integrase protein joins the previously processed 3' ends to the 5' ends of strands of target cellular DNA at the site of integration. The 5'-ends are produced by integrase-catalyzed staggered cuts, 5 bp apart. A Y-shaped, gapped, recombination intermediate results, with the 5'-ends of the viral DNA strands and the 3' ends of target DNA strands remaining unjoined, flanking a gap of 5 bp. The last step is viral DNA integration into host chromosome. This involves host DNA repair synthesis in which the 5 bp gaps between the unjoined strands are filled in and then ligated. Since this process occurs at both cuts flanking the HIV genome, a 5 bp duplication of host DNA is produced at the ends of HIV-1 integration. Alternatively, Integrase may catalyze the excision of viral DNA just after strand transfer, this is termed disintegration. The sequence is that of Gag-Pol polyprotein (gag-pol) from Human immunodeficiency virus type 1 group M subtype B (isolate JRCSF) (HIV-1).